Here is a 288-residue protein sequence, read N- to C-terminus: Energy-coupling factor transporter ATP-binding protein EcfA2 (288 aa).

Residues 3 to 246 (IKLEQLGYCY…PDELVDLGLS (244 aa)) form the ABC transporter domain. An ATP-binding site is contributed by 40–47 (GHTGSGKS).

Belongs to the ABC transporter superfamily. Energy-coupling factor EcfA family. As to quaternary structure, forms a stable energy-coupling factor (ECF) transporter complex composed of 2 membrane-embedded substrate-binding proteins (S component), 2 ATP-binding proteins (A component) and 2 transmembrane proteins (T component).

It is found in the cell membrane. Functionally, ATP-binding (A) component of a common energy-coupling factor (ECF) ABC-transporter complex. Unlike classic ABC transporters this ECF transporter provides the energy necessary to transport a number of different substrates. This chain is Energy-coupling factor transporter ATP-binding protein EcfA2, found in Listeria monocytogenes serovar 1/2a (strain ATCC BAA-679 / EGD-e).